The primary structure comprises 482 residues: Glycogen synthase (482 aa).

Lys-15 contacts ADP-alpha-D-glucose.

It belongs to the glycosyltransferase 1 family. Bacterial/plant glycogen synthase subfamily.

It catalyses the reaction [(1-&gt;4)-alpha-D-glucosyl](n) + ADP-alpha-D-glucose = [(1-&gt;4)-alpha-D-glucosyl](n+1) + ADP + H(+). The protein operates within glycan biosynthesis; glycogen biosynthesis. Its function is as follows. Synthesizes alpha-1,4-glucan chains using ADP-glucose. The chain is Glycogen synthase from Hydrogenobaculum sp. (strain Y04AAS1).